Consider the following 69-residue polypeptide: DNA gyrase inhibitor YacG (69 aa).

The segment covering 1–15 (MSDEPEHTAKVEPLR) has biased composition (basic and acidic residues). The interval 1–22 (MSDEPEHTAKVEPLRKPLPCPE) is disordered. Residues C20, C23, C35, and C39 each contribute to the Zn(2+) site.

It belongs to the DNA gyrase inhibitor YacG family. Interacts with GyrB. Requires Zn(2+) as cofactor.

Inhibits all the catalytic activities of DNA gyrase by preventing its interaction with DNA. Acts by binding directly to the C-terminal domain of GyrB, which probably disrupts DNA binding by the gyrase. In Allorhizobium ampelinum (strain ATCC BAA-846 / DSM 112012 / S4) (Agrobacterium vitis (strain S4)), this protein is DNA gyrase inhibitor YacG.